Reading from the N-terminus, the 159-residue chain is Ribosomal RNA large subunit methyltransferase H (159 aa).

Residues Leu76, Gly108, and 127–132 (FSRMTF) each bind S-adenosyl-L-methionine.

It belongs to the RNA methyltransferase RlmH family. As to quaternary structure, homodimer.

It is found in the cytoplasm. It carries out the reaction pseudouridine(1915) in 23S rRNA + S-adenosyl-L-methionine = N(3)-methylpseudouridine(1915) in 23S rRNA + S-adenosyl-L-homocysteine + H(+). Specifically methylates the pseudouridine at position 1915 (m3Psi1915) in 23S rRNA. The sequence is that of Ribosomal RNA large subunit methyltransferase H from Bacillus pumilus (strain SAFR-032).